We begin with the raw amino-acid sequence, 445 residues long: UDP-N-acetylmuramate--L-alanine ligase (445 aa).

Gly-108–Thr-114 contributes to the ATP binding site.

The protein belongs to the MurCDEF family.

It localises to the cytoplasm. The enzyme catalyses UDP-N-acetyl-alpha-D-muramate + L-alanine + ATP = UDP-N-acetyl-alpha-D-muramoyl-L-alanine + ADP + phosphate + H(+). It participates in cell wall biogenesis; peptidoglycan biosynthesis. Functionally, cell wall formation. The protein is UDP-N-acetylmuramate--L-alanine ligase of Pseudothermotoga lettingae (strain ATCC BAA-301 / DSM 14385 / NBRC 107922 / TMO) (Thermotoga lettingae).